We begin with the raw amino-acid sequence, 430 residues long: Protein POLLENLESS 3-LIKE 2 (430 aa).

The segment at 1 to 21 (MMRDVFRPTKSAPCSPAKPLG) is disordered. TPR repeat units lie at residues 40–73 (DSPY…GDRV), 74–107 (DSAL…CSDQ), 110–143 (ESLD…IQKG), 170–203 (TRLL…APDN), 205–236 (KMCN…VVDG), and 238–257 (RGVD…LNDL). The stretch at 81-107 (AIVMKQQNRAEEAIEAIKSLRVRCSDQ) forms a coiled coil. Positions 346–376 (KLKRTRSSSQGMGMLSGIGGDHEGETNTSTR) are disordered.

The protein belongs to the MS5 protein family.

It is found in the nucleus. Probably involved in the regulation of cell division. This Arabidopsis thaliana (Mouse-ear cress) protein is Protein POLLENLESS 3-LIKE 2.